Reading from the N-terminus, the 175-residue chain is MATGPRYFVAFRRRREGRTNYHARTRLVVATKPRMVVRKTNRHIICQIITAHMEGDRTHVAANSSELRKFGYEGSLNNTPAAYLTGMLLAVRALKAGQEGAILDIGLHRATPGARVFAALKGAVEAGFDIPHNEEILPADERCKGEHIAEYAPDRAGNLPANVAATVDAIMGELN.

It belongs to the universal ribosomal protein uL18 family. As to quaternary structure, part of the 50S ribosomal subunit. Contacts the 5S and 23S rRNAs.

In terms of biological role, this is one of the proteins that bind and probably mediate the attachment of the 5S RNA into the large ribosomal subunit, where it forms part of the central protuberance. The chain is Large ribosomal subunit protein uL18 from Methanospirillum hungatei JF-1 (strain ATCC 27890 / DSM 864 / NBRC 100397 / JF-1).